The primary structure comprises 350 residues: Small ribosomal subunit biogenesis GTPase RsgA (350 aa).

The segment covering 1-17 has biased composition (polar residues); sequence MSKNKLSKGQQRRVNAN. A disordered region spans residues 1–33; it reads MSKNKLSKGQQRRVNANHQRRLKTSKEKPDYDD. The CP-type G domain maps to 104–273; it reads TSVLTRPDFY…VIDSPGVREF (170 aa). GTP contacts are provided by residues 160 to 163 and 214 to 222; these read NKID and GQSGVGKSS. 4 residues coordinate Zn(2+): C297, C302, H304, and C310.

This sequence belongs to the TRAFAC class YlqF/YawG GTPase family. RsgA subfamily. In terms of assembly, monomer. Associates with 30S ribosomal subunit, binds 16S rRNA. Zn(2+) serves as cofactor.

It localises to the cytoplasm. Functionally, one of several proteins that assist in the late maturation steps of the functional core of the 30S ribosomal subunit. Helps release RbfA from mature subunits. May play a role in the assembly of ribosomal proteins into the subunit. Circularly permuted GTPase that catalyzes slow GTP hydrolysis, GTPase activity is stimulated by the 30S ribosomal subunit. The chain is Small ribosomal subunit biogenesis GTPase RsgA from Escherichia coli O6:H1 (strain CFT073 / ATCC 700928 / UPEC).